A 642-amino-acid polypeptide reads, in one-letter code: MPIITLPDGSQRQFENAVSVMDVAADIGPGLAKACIAGRVNGELVDACELIEQDSQLAIITAKDDEGLEIIRHSCAHLLGHAIKQLWPQTKMAIGPVIENGFYYDVDLDHSLTQEDLETLEKRMLELAKTDYDVIKKRVTWAQARETFVARGEDYKVAILDENISQDAHPALYHHQEYIDMCRGPHVPNMRFCHHFKLQKIAGAYWRGNSDNKMLQRIYGTAWADKKQLKAYLERLEEAAKRDHRKIGKQLDLYHMQEEAPGMAFWHNDGWTIFRELETFVRCKLKEYDYQEVKGPFMMDRVLWEKTGHWENYKENMFTTSSENREYCIKPMNCPGHVQIFKQGLRSYRDLPLRMAEFGSCHRNEPSGALHGLMRVRGFTQDDAHIFCTEEQILSEVNNCIKLIYDVYSTFGFEKIVVKLSTRPEKRIGEDALWDIAETDLAKALTDNNIEFEYQPGEGAFYGPKIEFTLYDCLDRAWQCGTVQLDFSLPGRLGASYVAENNERKVPVMLHRAVLGSLERFIGILTEEYAGFFPTWLAPQQVVVMNITDGQADYVQKLVKELQDAGIRAKADLRNEKIGFKIREHTLRRVPYMLVCGDKEVESGKVAVRTRRGKDLGSIDVNDFKEKLLQEIRSRSLHQLEE.

In terms of domain architecture, TGS spans 1-61; the sequence is MPIITLPDGS…EQDSQLAIIT (61 aa). Residues 243-534 are catalytic; sequence DHRKIGKQLD…LTEEYAGFFP (292 aa). Zn(2+)-binding residues include C334, H385, and H511.

Belongs to the class-II aminoacyl-tRNA synthetase family. As to quaternary structure, homodimer. Zn(2+) serves as cofactor.

It localises to the cytoplasm. It carries out the reaction tRNA(Thr) + L-threonine + ATP = L-threonyl-tRNA(Thr) + AMP + diphosphate + H(+). Functionally, catalyzes the attachment of threonine to tRNA(Thr) in a two-step reaction: L-threonine is first activated by ATP to form Thr-AMP and then transferred to the acceptor end of tRNA(Thr). Also edits incorrectly charged L-seryl-tRNA(Thr). The polypeptide is Threonine--tRNA ligase (Proteus mirabilis (strain HI4320)).